A 178-amino-acid chain; its full sequence is Translation initiation factor IF-3 (178 aa).

The tract at residues 1 to 20 is disordered; the sequence is MRRPFRATPVQKDGPRSNRD.

The protein belongs to the IF-3 family. As to quaternary structure, monomer.

The protein resides in the cytoplasm. Functionally, IF-3 binds to the 30S ribosomal subunit and shifts the equilibrium between 70S ribosomes and their 50S and 30S subunits in favor of the free subunits, thus enhancing the availability of 30S subunits on which protein synthesis initiation begins. In Brucella abortus biovar 1 (strain 9-941), this protein is Translation initiation factor IF-3.